Reading from the N-terminus, the 211-residue chain is Pyridoxine/pyridoxamine 5'-phosphate oxidase (211 aa).

Substrate-binding positions include 7–10 (RREY) and K65. Residues 60-65 (RIVLLK), 75-76 (YT), R81, K82, and Q104 each bind FMN. 3 residues coordinate substrate: Y122, R126, and S130. FMN contacts are provided by residues 139 to 140 (QS) and W184. Position 190 to 192 (190 to 192 (RLH)) interacts with substrate. R194 serves as a coordination point for FMN.

The protein belongs to the pyridoxamine 5'-phosphate oxidase family. Homodimer. FMN is required as a cofactor.

The enzyme catalyses pyridoxamine 5'-phosphate + O2 + H2O = pyridoxal 5'-phosphate + H2O2 + NH4(+). It carries out the reaction pyridoxine 5'-phosphate + O2 = pyridoxal 5'-phosphate + H2O2. The protein operates within cofactor metabolism; pyridoxal 5'-phosphate salvage; pyridoxal 5'-phosphate from pyridoxamine 5'-phosphate: step 1/1. It participates in cofactor metabolism; pyridoxal 5'-phosphate salvage; pyridoxal 5'-phosphate from pyridoxine 5'-phosphate: step 1/1. Catalyzes the oxidation of either pyridoxine 5'-phosphate (PNP) or pyridoxamine 5'-phosphate (PMP) into pyridoxal 5'-phosphate (PLP). In Vibrio vulnificus (strain CMCP6), this protein is Pyridoxine/pyridoxamine 5'-phosphate oxidase.